The following is a 165-amino-acid chain: Regulator of ribonuclease activity A (165 aa).

The protein belongs to the RraA family. Homotrimer. Binds to both RNA-binding sites in the C-terminal region of Rne and to RhlB.

The protein resides in the cytoplasm. In terms of biological role, globally modulates RNA abundance by binding to RNase E (Rne) and regulating its endonucleolytic activity. Can modulate Rne action in a substrate-dependent manner by altering the composition of the degradosome. Modulates RNA-binding and helicase activities of the degradosome. This Actinobacillus pleuropneumoniae serotype 5b (strain L20) protein is Regulator of ribonuclease activity A.